A 157-amino-acid polypeptide reads, in one-letter code: MVKHSDPNSKLIAENRRARFDYFIEEEIEAGIILMGSEVKSLRQGGSNIGESYASVENGELWLINGYIAPYLQAKTWGHEERRKRKLLVSRRELARLWNATAREGMTIVPIRMYFNDRGIVKLKIGIAKGKKLSDKRATEAKRDWGREKQRLLKQHS.

Basic and acidic residues predominate over residues 138–151 (ATEAKRDWGREKQR). The tract at residues 138-157 (ATEAKRDWGREKQRLLKQHS) is disordered.

Belongs to the SmpB family.

It localises to the cytoplasm. Its function is as follows. Required for rescue of stalled ribosomes mediated by trans-translation. Binds to transfer-messenger RNA (tmRNA), required for stable association of tmRNA with ribosomes. tmRNA and SmpB together mimic tRNA shape, replacing the anticodon stem-loop with SmpB. tmRNA is encoded by the ssrA gene; the 2 termini fold to resemble tRNA(Ala) and it encodes a 'tag peptide', a short internal open reading frame. During trans-translation Ala-aminoacylated tmRNA acts like a tRNA, entering the A-site of stalled ribosomes, displacing the stalled mRNA. The ribosome then switches to translate the ORF on the tmRNA; the nascent peptide is terminated with the 'tag peptide' encoded by the tmRNA and targeted for degradation. The ribosome is freed to recommence translation, which seems to be the essential function of trans-translation. This is SsrA-binding protein from Cereibacter sphaeroides (strain ATCC 17025 / ATH 2.4.3) (Rhodobacter sphaeroides).